A 369-amino-acid polypeptide reads, in one-letter code: UDP-3-O-acylglucosamine N-acyltransferase (369 aa).

His-252 acts as the Proton acceptor in catalysis. The tract at residues 348 to 369 is disordered; the sequence is ERRQRGENNAPAQNKQDEEKSS.

This sequence belongs to the transferase hexapeptide repeat family. LpxD subfamily. As to quaternary structure, homotrimer.

It catalyses the reaction a UDP-3-O-[(3R)-3-hydroxyacyl]-alpha-D-glucosamine + a (3R)-hydroxyacyl-[ACP] = a UDP-2-N,3-O-bis[(3R)-3-hydroxyacyl]-alpha-D-glucosamine + holo-[ACP] + H(+). It participates in bacterial outer membrane biogenesis; LPS lipid A biosynthesis. Functionally, catalyzes the N-acylation of UDP-3-O-acylglucosamine using 3-hydroxyacyl-ACP as the acyl donor. Is involved in the biosynthesis of lipid A, a phosphorylated glycolipid that anchors the lipopolysaccharide to the outer membrane of the cell. This Cupriavidus metallidurans (strain ATCC 43123 / DSM 2839 / NBRC 102507 / CH34) (Ralstonia metallidurans) protein is UDP-3-O-acylglucosamine N-acyltransferase.